The sequence spans 135 residues: Galectin-1 (135 aa).

Ala2 is modified (N-acetylalanine). In terms of domain architecture, Galectin spans 4–135 (GLVASNLNLK…DFKIKCVAFD (132 aa)). N6-acetyllysine is present on residues Lys13 and Lys29. At Ser30 the chain carries Phosphoserine. Residues 45-49 (HFNPR), His53, Asn62, and 69-72 (WGAE) each bind a beta-D-galactoside. Position 108 is an N6-acetyllysine; alternate (Lys108). An N6-succinyllysine; alternate modification is found at Lys108. N6-acetyllysine is present on Lys128.

In terms of assembly, homodimer. Binds LGALS3BP. Interacts with CD2, CD3, CD4, CD6, CD7, CD43, ALCAM and CD45. Interacts with laminin (via poly-N-acetyllactosamine). Interacts with SUSD2. Interacts with cargo receptor TMED10; the interaction mediates the translocation from the cytoplasm into the ERGIC (endoplasmic reticulum-Golgi intermediate compartment) and thereby secretion. In terms of processing, the N-terminus is blocked.

Its subcellular location is the secreted. The protein localises to the extracellular space. It localises to the extracellular matrix. The protein resides in the cytoplasm. Its function is as follows. Lectin that binds beta-galactoside and a wide array of complex carbohydrates. Plays a role in regulating apoptosis, cell proliferation and cell differentiation. Inhibits CD45 protein phosphatase activity and therefore the dephosphorylation of Lyn kinase. Strong inducer of T-cell apoptosis. The protein is Galectin-1 of Bubalus bubalis (Domestic water buffalo).